The following is a 496-amino-acid chain: L-carnitine dehydrogenase/betainyl-CoA thioesterase (496 aa).

The interval 1–335 (MTTITKAACI…KRLWEKGGSP (335 aa)) is L-carnitine dehydrogenase. 11–16 (GGGVIG) is a binding site for NAD(+). The interval 336–496 (SKSLDASGPL…GAGRHVGQKR (161 aa)) is betainyl-CoA thioesterase.

The protein in the N-terminal section; belongs to the 3-hydroxyacyl-CoA dehydrogenase family. L-carnitine dehydrogenase subfamily. It in the C-terminal section; belongs to the betainyl-CoA thioesterase family. As to quaternary structure, homodimer.

It is found in the cytoplasm. It carries out the reaction carnitine + NAD(+) = 3-dehydrocarnitine + NADH + H(+). The enzyme catalyses N,N,N-trimethylglycyl-CoA + H2O = glycine betaine + CoA + H(+). It functions in the pathway amine and polyamine metabolism; carnitine metabolism. Its function is as follows. Multifunctional enzyme that catalyzes the NAD(+)-dependent oxidation of L-carnitine to 3-dehydrocarnitine and the cleavage of betainyl-CoA (N,N,N-trimethylglycyl-CoA) into glycine betaine and coenzyme A. Can also hydrolyze L-carnitinyl-CoA, but with much lower efficiency. Is involved in a L-carnitine degradation pathway that allows R.meliloti to grow on L-carnitine as the sole source of carbon and nitrogen. This is L-carnitine dehydrogenase/betainyl-CoA thioesterase from Rhizobium meliloti (strain 1021) (Ensifer meliloti).